Here is a 286-residue protein sequence, read N- to C-terminus: D-tagatose-1,6-bisphosphate aldolase subunit KbaY (286 aa).

The Proton donor role is filled by Asp-82. 2 residues coordinate Zn(2+): His-83 and His-180. Gly-181 provides a ligand contact to dihydroxyacetone phosphate. Residue His-208 participates in Zn(2+) binding. Residues 209-211 (GAS) and 230-233 (NVAT) each bind dihydroxyacetone phosphate.

This sequence belongs to the class II fructose-bisphosphate aldolase family. TagBP aldolase KbaY subfamily. In terms of assembly, homotetramer. Forms a complex with KbaZ. Requires Zn(2+) as cofactor.

The catalysed reaction is D-tagatofuranose 1,6-bisphosphate = D-glyceraldehyde 3-phosphate + dihydroxyacetone phosphate. It functions in the pathway carbohydrate metabolism; D-tagatose 6-phosphate degradation; D-glyceraldehyde 3-phosphate and glycerone phosphate from D-tagatose 6-phosphate: step 2/2. Catalytic subunit of the tagatose-1,6-bisphosphate aldolase KbaYZ, which catalyzes the reversible aldol condensation of dihydroxyacetone phosphate (DHAP or glycerone-phosphate) with glyceraldehyde 3-phosphate (G3P) to produce tagatose 1,6-bisphosphate (TBP). Requires KbaZ subunit for full activity and stability. This chain is D-tagatose-1,6-bisphosphate aldolase subunit KbaY, found in Escherichia coli O127:H6 (strain E2348/69 / EPEC).